The primary structure comprises 300 residues: N-acetylmannosamine kinase (300 aa).

Residues 5 to 12 (ALDIGGTK) and 132 to 139 (GVGGGIVL) contribute to the ATP site. Zn(2+) contacts are provided by His156, Cys166, Cys168, and Cys173.

The protein belongs to the ROK (NagC/XylR) family. NanK subfamily. Homodimer.

It catalyses the reaction an N-acyl-D-mannosamine + ATP = an N-acyl-D-mannosamine 6-phosphate + ADP + H(+). It functions in the pathway amino-sugar metabolism; N-acetylneuraminate degradation; D-fructose 6-phosphate from N-acetylneuraminate: step 2/5. Catalyzes the phosphorylation of N-acetylmannosamine (ManNAc) to ManNAc-6-P. This chain is N-acetylmannosamine kinase, found in Haemophilus influenzae (strain PittGG).